A 129-amino-acid polypeptide reads, in one-letter code: Venom CUB domain-containing protein 1 (129 aa).

A signal peptide spans 1-18 (MKLLGVLITIYCIASTLA). The 103-residue stretch at 19-121 (IDVNVPSNGM…KASCKAYSIT (103 aa)) folds into the CUB domain. C66 and C83 are joined by a disulfide.

The protein belongs to the venom CUB family. Post-translationally, contains 2 disulfide bonds. As to expression, expressed by the venom gland.

It is found in the secreted. In Platymeris rhadamanthus (Red spot assassin bug), this protein is Venom CUB domain-containing protein 1.